Consider the following 92-residue polypeptide: Acyl carrier protein AcpXL (92 aa).

Residues 2–88 (TATFDKVADI…NLCAKIDELK (87 aa)) enclose the Carrier domain. O-(pantetheine 4'-phosphoryl)serine is present on serine 37.

4'-phosphopantetheine is transferred from CoA to a specific serine of apo-ACP by AcpS. This modification is essential for activity because fatty acids are bound in thioester linkage to the sulfhydryl of the prosthetic group.

The protein resides in the cytoplasm. The protein operates within glycolipid biosynthesis; KDO(2)-lipid A biosynthesis. Carrier of the growing fatty acid chain in fatty acid biosynthesis. Is involved in the transfer of long hydroxylated fatty acids to lipid A. Is acylated predominantly with 27-hydroxyoctacosanoic acid. This is Acyl carrier protein AcpXL (acpXL) from Rhizobium etli (strain ATCC 51251 / DSM 11541 / JCM 21823 / NBRC 15573 / CFN 42).